The sequence spans 84 residues: Putative membrane protein insertion efficiency factor (84 aa).

It belongs to the UPF0161 family.

The protein localises to the cell inner membrane. Functionally, could be involved in insertion of integral membrane proteins into the membrane. This Shewanella loihica (strain ATCC BAA-1088 / PV-4) protein is Putative membrane protein insertion efficiency factor.